Reading from the N-terminus, the 542-residue chain is Peptide chain release factor 3 (542 aa).

The region spanning 14–283 is the tr-type G domain; that stretch reads ERRRNFAIIS…AFLDYALKPA (270 aa). GTP-binding positions include 23–30, 91–95, and 145–148; these read SHPDAGKT, DTPGH, and NKLD.

The protein belongs to the TRAFAC class translation factor GTPase superfamily. Classic translation factor GTPase family. PrfC subfamily.

The protein localises to the cytoplasm. Functionally, increases the formation of ribosomal termination complexes and stimulates activities of RF-1 and RF-2. It binds guanine nucleotides and has strong preference for UGA stop codons. It may interact directly with the ribosome. The stimulation of RF-1 and RF-2 is significantly reduced by GTP and GDP, but not by GMP. In Cyanothece sp. (strain PCC 7425 / ATCC 29141), this protein is Peptide chain release factor 3.